Reading from the N-terminus, the 55-residue chain is MSLGPWQLFLVLIIILVLFGAGRLPQVMGDLGKGIKNLKQELKDSEKLSSNEPDR.

A helical transmembrane segment spans residues 1–21; that stretch reads MSLGPWQLFLVLIIILVLFGA.

The protein belongs to the TatA/E family. The Tat system comprises two distinct complexes: a TatABC complex, containing multiple copies of TatA, TatB and TatC subunits, and a separate TatA complex, containing only TatA subunits. Substrates initially bind to the TatABC complex, which probably triggers association of the separate TatA complex to form the active translocon.

The protein resides in the cell membrane. In terms of biological role, part of the twin-arginine translocation (Tat) system that transports large folded proteins containing a characteristic twin-arginine motif in their signal peptide across membranes. TatA could form the protein-conducting channel of the Tat system. The protein is Sec-independent protein translocase protein TatA of Wolbachia pipientis wMel.